The primary structure comprises 303 residues: Glycine--tRNA ligase alpha subunit (303 aa).

It belongs to the class-II aminoacyl-tRNA synthetase family. In terms of assembly, tetramer of two alpha and two beta subunits.

It is found in the cytoplasm. The catalysed reaction is tRNA(Gly) + glycine + ATP = glycyl-tRNA(Gly) + AMP + diphosphate. This is Glycine--tRNA ligase alpha subunit from Syntrophomonas wolfei subsp. wolfei (strain DSM 2245B / Goettingen).